The primary structure comprises 98 residues: Lipolysis-activating peptide 1-beta chain (98 aa).

A signal peptide spans 1 to 22 (MANVQVIFVAYIAVIAFSMVYG). The region spanning 23-91 (DDYKPFGEHN…FLKAMEKQCP (69 aa)) is the LCN-type CS-alpha/beta domain. 3 cysteine pairs are disulfide-bonded: Cys-37/Cys-60, Cys-45/Cys-70, and Cys-49/Cys-72.

It belongs to the long (3 C-C) scorpion toxin superfamily. Homodimer; disulfide-linked or monomer (edited version) or heterodimer of an alpha chain (AC B8XH01) and this beta chain (non-edited version). In terms of tissue distribution, expressed by the venom gland.

Its subcellular location is the secreted. In terms of biological role, the homodimer inhibits HMG-CoA reductase (HMGCR) (32% of inhibition produced by 0.6 uM), a glycoprotein involved in the control of cholesterol biosynthesis. The inhibitory effects of bumarsin are seen at much lower concentrations (0.6 uM) than that for statins such as atorvastatin (5 mM) and simvastatin (10 uM). In addition to inhibition of HMG-CoA reductase, this protein lowers cholesterol levels by inducing steroid hormone synthesis via StAR, and by increasing reverse cholesterol transport mediated by the induction of ABCA1 and APOA1. The heterodimer non-edited LVP1 induces lipolysis in rat adipocytes. Induction of lipolysis by LVP1 appears to be mediated through the beta-2 adrenergic receptor pathway (ADRB2). Functionally, the monomer edited version, similar to alpha-toxins, may modulate voltage-gated sodium channels (Nav) and may block voltage-gated potassium channels (Kv). The protein is Lipolysis-activating peptide 1-beta chain of Buthus israelis (Israeli scorpion).